Consider the following 438-residue polypeptide: Histidinol dehydrogenase (438 aa).

The NAD(+) site is built by Tyr135, Gln193, and Asn216. Residues Ser243, Gln265, and His268 each coordinate substrate. Zn(2+) is bound by residues Gln265 and His268. Residues Glu332 and His333 each act as proton acceptor in the active site. Positions 333, 366, 420, and 425 each coordinate substrate. Asp366 lines the Zn(2+) pocket. A Zn(2+)-binding site is contributed by His425.

The protein belongs to the histidinol dehydrogenase family. It depends on Zn(2+) as a cofactor.

The enzyme catalyses L-histidinol + 2 NAD(+) + H2O = L-histidine + 2 NADH + 3 H(+). The protein operates within amino-acid biosynthesis; L-histidine biosynthesis; L-histidine from 5-phospho-alpha-D-ribose 1-diphosphate: step 9/9. Catalyzes the sequential NAD-dependent oxidations of L-histidinol to L-histidinaldehyde and then to L-histidine. The chain is Histidinol dehydrogenase from Shewanella oneidensis (strain ATCC 700550 / JCM 31522 / CIP 106686 / LMG 19005 / NCIMB 14063 / MR-1).